Consider the following 480-residue polypeptide: MVRRIASATPMVQSPMSPLGTTYCVRPNPVSLNLQRRPLVIASTDEAKVTIIYAGLLIPGDGEPLRNAALVISDKIIAFVGSEADIPKKYLRSTQSTHRVPVLMPGLWDCHMHFGGDDDYYNDYTSGLATHPASSGARLARGCWEALQNGYTSYRDLAGYGCEVAKAINDGTIVGPNVYSSGAALSQTAGHGDIFALPAGEVLGSYGVMNPRPGYWGAGPLCIADGVEEVRRAVRLQIRRGAKVIKVMASGGVMSRDDNPNFAQFSPEELKVIVEEAARQNRIVSAHVHGKAGIMAAIKAGCKSLEHVSYADEEVWELMKEKGILYVATRSVIEIFLASNGEGLVKESWAKLQALADSHLKAYQGAIKAGVTIALGTDTAPGGPTALELQFAVERGGMTPLEAIKAATANAPLSVGPQAPLTGQLREGYEADVIALEENPLEDIKVFQEPKAVTHVWKGGKLFKGPGIGPWGEDARNPFL.

Zn(2+) is bound by residues histidine 111, histidine 113, lysine 246, histidine 287, and histidine 307. The active site involves lysine 246. Residue aspartate 378 is part of the active site.

It belongs to the metallo-dependent hydrolases superfamily. Ochratoxinase amidase 2 family. As to quaternary structure, homooctamer. Zn(2+) is required as a cofactor.

Its subcellular location is the secreted. The catalysed reaction is ochratoxin A + H2O = ochratoxin alpha + L-phenylalanine. Its activity is regulated as follows. The Zn(2+)-specific chelator 1,10-phenanthroline inhibits the enzyme activity. Carboxypeptidase that catalyzes the release of a C-terminal amino acid with specific catalytic activity for aromatic amino acids such as phenylalanine. Is able to degrade ochratoxin A, one of the five major mycotoxins most harmful to humans and animals that is produced by Aspergillus and Penicillium species and occurs in a wide range of agricultural products. The polypeptide is Ochratoxinase (Aspergillus niger (strain ATCC MYA-4892 / CBS 513.88 / FGSC A1513)).